Consider the following 638-residue polypeptide: Threonine--tRNA ligase (638 aa).

Residues 1-61 enclose the TGS domain; that stretch reads MPLITLPDGN…DKDCSVKIFT (61 aa). Residues 243–535 form a catalytic region; that stretch reads DHRKLGKEMD…LIENYAGKFP (293 aa). The Zn(2+) site is built by C335, H386, and H512.

Belongs to the class-II aminoacyl-tRNA synthetase family. As to quaternary structure, homodimer. The cofactor is Zn(2+).

It localises to the cytoplasm. The catalysed reaction is tRNA(Thr) + L-threonine + ATP = L-threonyl-tRNA(Thr) + AMP + diphosphate + H(+). Catalyzes the attachment of threonine to tRNA(Thr) in a two-step reaction: L-threonine is first activated by ATP to form Thr-AMP and then transferred to the acceptor end of tRNA(Thr). Also edits incorrectly charged L-seryl-tRNA(Thr). In Pelagibacter ubique (strain HTCC1062), this protein is Threonine--tRNA ligase.